The sequence spans 946 residues: Isoleucine--tRNA ligase (946 aa).

Positions 58-68 match the 'HIGH' region motif; sequence PYANGSIHIGH. Glu568 contributes to the L-isoleucyl-5'-AMP binding site. Positions 609-613 match the 'KMSKS' region motif; the sequence is KMSKS. Position 612 (Lys612) interacts with ATP. The Zn(2+) site is built by Cys908, Cys911, Cys928, and Cys931.

It belongs to the class-I aminoacyl-tRNA synthetase family. IleS type 1 subfamily. As to quaternary structure, monomer. The cofactor is Zn(2+).

Its subcellular location is the cytoplasm. It carries out the reaction tRNA(Ile) + L-isoleucine + ATP = L-isoleucyl-tRNA(Ile) + AMP + diphosphate. In terms of biological role, catalyzes the attachment of isoleucine to tRNA(Ile). As IleRS can inadvertently accommodate and process structurally similar amino acids such as valine, to avoid such errors it has two additional distinct tRNA(Ile)-dependent editing activities. One activity is designated as 'pretransfer' editing and involves the hydrolysis of activated Val-AMP. The other activity is designated 'posttransfer' editing and involves deacylation of mischarged Val-tRNA(Ile). The sequence is that of Isoleucine--tRNA ligase from Chromohalobacter salexigens (strain ATCC BAA-138 / DSM 3043 / CIP 106854 / NCIMB 13768 / 1H11).